Consider the following 301-residue polypeptide: Zinc finger protein 346 (301 aa).

Matrin-type zinc fingers lie at residues 55–85 (SQCK…KVRR) and 117–141 (KACS…GKVH). The Zn(2+) site is built by cysteine 57, cysteine 60, histidine 73, histidine 79, cysteine 119, cysteine 122, histidine 135, and histidine 141. Positions 151–177 (GSQTPALPQPEAQAKKDDGMQGPAEQD) are disordered. 2 consecutive Matrin-type zinc fingers follow at residues 180–210 (RFCS…HMNK) and 230–257 (YPCT…HKNH). The interval 250 to 283 (SGSKHKNHAKPKKGPNAFAPPPDNYQPDYQYPTN) is disordered. Positions 251 to 262 (GSKHKNHAKPKK) are enriched in basic residues.

It localises to the nucleus. Its subcellular location is the cytoplasm. Functionally, binds preferentially to dsRNA, but also to RNA-DNA hybrids. The polypeptide is Zinc finger protein 346 (Danio rerio (Zebrafish)).